The primary structure comprises 49 residues: Cytochrome b559 subunit beta (49 aa).

The chain crosses the membrane as a helical span at residues 24–40; sequence WLAVHVLGVPTVFFLGA. His28 contributes to the heme binding site.

The protein belongs to the PsbE/PsbF family. As to quaternary structure, heterodimer of an alpha subunit and a beta subunit. PSII is composed of 1 copy each of membrane proteins PsbA, PsbB, PsbC, PsbD, PsbE, PsbF, PsbH, PsbI, PsbJ, PsbK, PsbL, PsbM, PsbT, PsbX, PsbY, Psb30/Ycf12, peripheral proteins PsbO, CyanoQ (PsbQ), PsbU, PsbV and a large number of cofactors. It forms dimeric complexes. Requires heme b as cofactor.

It localises to the cellular thylakoid membrane. Its function is as follows. This b-type cytochrome is tightly associated with the reaction center of photosystem II (PSII). PSII is a light-driven water:plastoquinone oxidoreductase that uses light energy to abstract electrons from H(2)O, generating O(2) and a proton gradient subsequently used for ATP formation. It consists of a core antenna complex that captures photons, and an electron transfer chain that converts photonic excitation into a charge separation. The sequence is that of Cytochrome b559 subunit beta from Prochlorococcus marinus (strain MIT 9303).